Consider the following 360-residue polypeptide: Peptide chain release factor 1 (360 aa).

Position 235 is an N5-methylglutamine (Q235). The tract at residues 284 to 313 is disordered; that stretch reads AKRQQAEASTRRNLLGSGDRSDRNRTYNFP.

The protein belongs to the prokaryotic/mitochondrial release factor family. In terms of processing, methylated by PrmC. Methylation increases the termination efficiency of RF1.

It is found in the cytoplasm. Its function is as follows. Peptide chain release factor 1 directs the termination of translation in response to the peptide chain termination codons UAG and UAA. The chain is Peptide chain release factor 1 from Salmonella schwarzengrund (strain CVM19633).